The sequence spans 422 residues: Imidazolonepropionase (422 aa).

Fe(3+) contacts are provided by H82 and H84. H82 and H84 together coordinate Zn(2+). 4-imidazolone-5-propanoate is bound by residues R91, Y154, and H187. Y154 lines the N-formimidoyl-L-glutamate pocket. H252 contributes to the Fe(3+) binding site. A Zn(2+)-binding site is contributed by H252. E255 lines the 4-imidazolone-5-propanoate pocket. Fe(3+) is bound at residue D327. D327 contacts Zn(2+). Residues N329 and G331 each contribute to the N-formimidoyl-L-glutamate site. S332 contacts 4-imidazolone-5-propanoate.

This sequence belongs to the metallo-dependent hydrolases superfamily. HutI family. The cofactor is Zn(2+). Requires Fe(3+) as cofactor.

It is found in the cytoplasm. The enzyme catalyses 4-imidazolone-5-propanoate + H2O = N-formimidoyl-L-glutamate. It functions in the pathway amino-acid degradation; L-histidine degradation into L-glutamate; N-formimidoyl-L-glutamate from L-histidine: step 3/3. In terms of biological role, catalyzes the hydrolytic cleavage of the carbon-nitrogen bond in imidazolone-5-propanoate to yield N-formimidoyl-L-glutamate. It is the third step in the universal histidine degradation pathway. This is Imidazolonepropionase from Alkaliphilus oremlandii (strain OhILAs) (Clostridium oremlandii (strain OhILAs)).